Here is a 57-residue protein sequence, read N- to C-terminus: Light-harvesting protein B-808/866 alpha chain (57 aa).

Residue Met1 is modified to N-formylmethionine. The Cytoplasmic portion of the chain corresponds to 1-10; that stretch reads MQPRSPVRTN. The helical transmembrane segment at 11-30 threads the bilayer; the sequence is IVIFTILGFVVALLIHFIVL. His26 provides a ligand contact to a bacteriochlorophyll. Topologically, residues 31-57 are periplasmic; the sequence is SSPEYNWLSNAEGGALLLSAARALFGI.

Belongs to the antenna complex alpha subunit family. As to quaternary structure, the core complex is formed by different alpha and beta chains, binding bacteriochlorophyll molecules, and arranged most probably in tetrameric structures disposed around the reaction center. The non-pigmented gamma chains may constitute additional components.

The protein localises to the cell membrane. Functionally, antenna complexes are light-harvesting systems, which transfer the excitation energy to the reaction centers. In Chloroflexus aurantiacus (strain ATCC 29366 / DSM 635 / J-10-fl), this protein is Light-harvesting protein B-808/866 alpha chain (puf2A).